We begin with the raw amino-acid sequence, 287 residues long: MPPLWVVLALGCLRLGSGVNLQPQLASVTFATNNPTLTTVALEKPLCMFDSSAALHGTYEVYLYVLVDSASFRNASVQDSTKTPLSSTFQQTQGGRTGPYKAAAFDLTPCSDSPSLDAVRDVSRASEILNAYLIRVGTNGTCLLDPNFQGLCNPPLSAATEYRFKYVLVNMSSGLVQDQTLWSDPIRTDRLTLYSAIDTWPGRRSGGMIVITSILGSLPFFLLIGFAGAIVLSLVDRGDADGATSHDSQITQEAVPKSLGTSEPSYTSVNRGPSLDRAEVYASKLQD.

Residues 1–18 form the signal peptide; it reads MPPLWVVLALGCLRLGSG. Over 19–207 the chain is Lumenal; sequence VNLQPQLASV…DTWPGRRSGG (189 aa). N-linked (GlcNAc...) asparagine glycans are attached at residues Asn-74, Asn-139, and Asn-170. Residues 208–235 traverse the membrane as a helical segment; that stretch reads MIVITSILGSLPFFLLIGFAGAIVLSLV. Topologically, residues 236-287 are cytoplasmic; sequence DRGDADGATSHDSQITQEAVPKSLGTSEPSYTSVNRGPSLDRAEVYASKLQD. The interval 243 to 274 is disordered; sequence ATSHDSQITQEAVPKSLGTSEPSYTSVNRGPS. Residues 259–271 show a composition bias toward polar residues; that stretch reads LGTSEPSYTSVNR.

This sequence belongs to the uroplakin-3 family. Heterodimer with uroplakin-1B (UPK1B). In terms of tissue distribution, bladder epithelium.

The protein localises to the endoplasmic reticulum membrane. Its function is as follows. Component of the asymmetric unit membrane (AUM); a highly specialized biomembrane elaborated by terminally differentiated urothelial cells. May play an important role in AUM-cytoskeleton interaction in terminally differentiated urothelial cells. It also contributes to the formation of urothelial glycocalyx which may play an important role in preventing bacterial adherence. This chain is Uroplakin-3a (UPK3A), found in Bos taurus (Bovine).